A 372-amino-acid chain; its full sequence is Lysophosphatidic acid receptor 5 (372 aa).

Topologically, residues 1 to 30 are extracellular; that stretch reads MFANSSANTTSTNSSVLQCPDYRDTHRLHM. N-linked (GlcNAc...) asparagine glycosylation is found at Asn4, Asn8, and Asn13. Residues 31 to 51 traverse the membrane as a helical segment; the sequence is VVYSLVLATGLPLNALALWVF. Residues 52–59 lie on the Cytoplasmic side of the membrane; the sequence is LRVLRVHS. The chain crosses the membrane as a helical span at residues 60–80; sequence VVSVYMCNLAASDLLFTLSLP. The Extracellular segment spans residues 81-100; sequence LRLSYYAQHHWPFPGFLCQT. Cys98 and Cys179 are joined by a disulfide. The chain crosses the membrane as a helical span at residues 101–121; it reads SGAIFQMNMYGSCLFLMLINV. At 122 to 140 the chain is on the cytoplasmic side; that stretch reads DRYAAIVHPLRLRHLRRPR. Residues 141 to 161 form a helical membrane-spanning segment; it reads VARRLCLGVWALILLFAVPAA. At 162 to 191 the chain is on the extracellular side; that stretch reads RVHSPSHCTYKNITVRLCFESFSDELWKGR. N-linked (GlcNAc...) asparagine glycosylation is present at Asn173. Residues 192-212 traverse the membrane as a helical segment; that stretch reads LLPLLLLAEILGFLLPLAAVV. The Cytoplasmic segment spans residues 213-243; it reads YSSGRVFWTLARPDATQSQRRRKTVRLLLAN. Residues 244–264 form a helical membrane-spanning segment; sequence LIIFLLCFVPYNSTLAVYGLL. At 265–280 the chain is on the extracellular side; it reads RANLVKNSIQDRDQVR. Residues 281–301 traverse the membrane as a helical segment; the sequence is GVLMIMVLLAGANCVLDPLVY. At 302-372 the chain is on the cytoplasmic side; it reads YFSAEGFRNT…PDNCSQDSAL (71 aa).

This sequence belongs to the G-protein coupled receptor 1 family.

The protein resides in the cell membrane. Its function is as follows. Receptor for lysophosphatidic acid (LPA), a mediator of diverse cellular activities. The sequence is that of Lysophosphatidic acid receptor 5 (Lpar5) from Mus musculus (Mouse).